A 428-amino-acid chain; its full sequence is Probable G-protein coupled receptor (428 aa).

Over 1 to 46 (MMADKTSPMITSDHSISNFSTGLFGPHPTVPPDVGVVTSSQSQMKD) the chain is Extracellular. Asn18 carries an N-linked (GlcNAc...) asparagine glycan. A helical transmembrane segment spans residues 47-67 (LFGLFCMVTLNLIALLANTGV). The Cytoplasmic segment spans residues 68 to 93 (MVAIARAPHLKKFAFVCHLCAVDVLC). A helical membrane pass occupies residues 94-114 (AILLMPLGIISSSPFFGTVVF). Residues 115–120 (TILECQ) lie on the Extracellular side of the membrane. The helical transmembrane segment at 121–141 (VYIFLNVFLIWLSILTITAIS) threads the bilayer. Topologically, residues 142–162 (VERYFYIVHPMRYEVKMTINL) are cytoplasmic. The helical transmembrane segment at 163–183 (VIGVMLLIWFKSLLLALVTLF) threads the bilayer. Residues 184 to 210 (GWPPYGHQSSIAASHCSLHASHSRLRG) are Extracellular-facing. The helical transmembrane segment at 211 to 231 (VFAVLFCVICFLAPVVVIFSV) threads the bilayer. Topologically, residues 232–293 (YSAVYKVARS…PERAFSGGKA (62 aa)) are cytoplasmic. Residues 294-314 (ALTLAFIVGQFLVCWLPFFIF) form a helical membrane-spanning segment. The Extracellular portion of the chain corresponds to 315–428 (HLQMSLTGSM…IPGQIPEEQA (114 aa)). Over residues 398-414 (SETHPSFANSNPRNMEN) the composition is skewed to polar residues. Residues 398–428 (SETHPSFANSNPRNMENQAHKIPGQIPEEQA) form a disordered region.

It belongs to the G-protein coupled receptor 1 family.

Its subcellular location is the cell membrane. In Oryzias latipes (Japanese rice fish), this protein is Probable G-protein coupled receptor.